We begin with the raw amino-acid sequence, 225 residues long: Octanoyltransferase (225 aa).

Residues 37–217 form the BPL/LPL catalytic domain; it reads SDTPDEFWVV…ELASLIGYQT (181 aa). Substrate is bound by residues 76 to 83, 148 to 150, and 161 to 163; these read RGGQVTYH, SLG, and GLA. Residue cysteine 179 is the Acyl-thioester intermediate of the active site.

This sequence belongs to the LipB family.

It localises to the cytoplasm. The enzyme catalyses octanoyl-[ACP] + L-lysyl-[protein] = N(6)-octanoyl-L-lysyl-[protein] + holo-[ACP] + H(+). It participates in protein modification; protein lipoylation via endogenous pathway; protein N(6)-(lipoyl)lysine from octanoyl-[acyl-carrier-protein]: step 1/2. Its function is as follows. Catalyzes the transfer of endogenously produced octanoic acid from octanoyl-acyl-carrier-protein onto the lipoyl domains of lipoate-dependent enzymes. Lipoyl-ACP can also act as a substrate although octanoyl-ACP is likely to be the physiological substrate. The sequence is that of Octanoyltransferase from Aeromonas salmonicida (strain A449).